Reading from the N-terminus, the 224-residue chain is Putative adhesin A1G_07050 (224 aa).

An N-terminal signal peptide occupies residues 1–22; it reads MKKLLLIAATSATILSSSVSFA.

The polypeptide is Putative adhesin A1G_07050 (Rickettsia rickettsii (strain Sheila Smith)).